The sequence spans 79 residues: Serine protease inhibitor Kazal-type 1 (79 aa).

Residues 1–18 form the signal peptide; the sequence is MKVAIIFLLSALALLSLA. A Kazal-like domain is found at 26–79; it reads NGKTPNCPKQIMGCPRIYDPVCGTNGITYPSECSLCFENRKFGTSIHIQRRGTC. 3 disulfides stabilise this stretch: C32/C61, C39/C58, and C47/C79.

The protein resides in the secreted. Serine protease inhibitor which exhibits anti-trypsin activity. In the pancreas, protects against trypsin-catalyzed premature activation of zymogens. Its function is as follows. In the male reproductive tract, binds to sperm heads where it modulates sperm capacitance by inhibiting calcium uptake and nitrogen oxide (NO) production. In Rattus norvegicus (Rat), this protein is Serine protease inhibitor Kazal-type 1.